Reading from the N-terminus, the 285-residue chain is Aquaporin-6 (285 aa).

3 helical membrane passes run 36–56 (IFWK…VFSC), 76–96 (YCFK…ALLL), and 105–125 (ISLV…CYYG). An NPA 1 motif is present at residues 86 to 88 (NPV). N-linked (GlcNAc...) asparagine glycosylation occurs at Asn-128. Helical transmembrane passes span 143–163 (VSPA…ILTM) and 177–197 (GDSN…SGMA). Residues 206–208 (NPM) carry the NPA 2 motif. Residues 225 to 245 (YIYWIGPIFGCLLAVFTFDYT) form a helical membrane-spanning segment.

This sequence belongs to the MIP/aquaporin (TC 1.A.8) family.

Its subcellular location is the cell membrane. Probable water-specific aquaporin that may modulate the water content and osmolytes during anhydrobiosis. In Milnesium tardigradum (Water bear), this protein is Aquaporin-6.